We begin with the raw amino-acid sequence, 545 residues long: Hsk1-interacting molecule 1 (545 aa).

The DBF4-type zinc finger occupies 492 to 541 (VDAKPGYCENCREKFDNFESHIRSSRHRRFAENNDNFKDLDELFALVQRP). Zn(2+) is bound by residues Cys-499, Cys-502, His-512, and His-518.

In terms of assembly, associates with hsk1. Interacts with mcm10. Post-translationally, hyperphosphorylated at the G1/S and S-phases of the cell cycle.

The protein resides in the nucleus. In terms of biological role, activates hsk1 kinase and is essential for G1/S transition. Has a role in S-phase checkpoint control induced by replication fork blocks after nucleotide deprivation and DNA damage. The protein is Hsk1-interacting molecule 1 (him1) of Schizosaccharomyces pombe (strain 972 / ATCC 24843) (Fission yeast).